We begin with the raw amino-acid sequence, 316 residues long: ATP synthase gamma chain (316 aa).

The protein belongs to the ATPase gamma chain family. F-type ATPases have 2 components, CF(1) - the catalytic core - and CF(0) - the membrane proton channel. CF(1) has five subunits: alpha(3), beta(3), gamma(1), delta(1), epsilon(1). CF(0) has three main subunits: a, b and c.

It localises to the cellular thylakoid membrane. Produces ATP from ADP in the presence of a proton gradient across the membrane. The gamma chain is believed to be important in regulating ATPase activity and the flow of protons through the CF(0) complex. This is ATP synthase gamma chain from Prochlorococcus marinus (strain MIT 9515).